A 104-amino-acid polypeptide reads, in one-letter code: Small ribosomal subunit protein bS18c (104 aa).

This sequence belongs to the bacterial ribosomal protein bS18 family. Part of the 30S ribosomal subunit.

Its subcellular location is the plastid. It localises to the chloroplast. The protein is Small ribosomal subunit protein bS18c of Lotus japonicus (Lotus corniculatus var. japonicus).